The primary structure comprises 36 residues: Photosystem I reaction center subunit VIII (36 aa).

A helical transmembrane segment spans residues proline 7–tyrosine 29.

Belongs to the PsaI family.

The protein resides in the plastid. Its subcellular location is the chloroplast thylakoid membrane. In terms of biological role, may help in the organization of the PsaL subunit. The polypeptide is Photosystem I reaction center subunit VIII (Psilotum nudum (Whisk fern)).